The sequence spans 591 residues: MHMYRSHTCADLSAQDVGKTVRLSGWVHRVRDHGGVLFIDLRDHYGITQVLCDPDSPVFEQMEQVRAEWCIRVDGVVKARDASLINPKISTGEIELFVKDLEVLGASEELPLQVFGDQEYPEETRLKYRYLDLRRANMQANMKLRSDVVASLRQQMWKADFREFQTPIITASSPEGARDFLVPSRLHPGRFYALPQAPQQFKQLLMVSGFDKYFQIAPCFRDEDPRADRSPTDFYQLDIEMSFVTQQDVFDVIQPVLTQVFEQFGNGKAVDQEWPQISYKDAALWYGSDKPDLRNPIKMQSVSEHFAGSGFAIFANLLEQEGTEIRAIPAPGGGSRKFCDRMNAFAQKEGLPGMGYIFWRDQGAGMEAAGPLAKNIGPERTEAIRQQLGLGVGDAAFFLGGKPKAFETVAGKARNHIGMELGLTDQNRFAFAWIVDFPIYEKDSETGRIDFEHNPFSMPQGGLEALQGDPLSVVGYQYDLSCNGYELVSGAIRNHKPEIMFKAFEIAGYGEDEVRKRFGGMVNAFQYGAPPHGGCAAGIDRIVMLLAEEANIREVILFPMNQRAEDLMMSAPSEPESEQLMELGLRVIPKD.

Glu-175 contacts L-aspartate. Positions 199-202 are aspartate; that stretch reads QQFK. Positions 221 and 453 each coordinate L-aspartate. 221-223 is an ATP binding site; that stretch reads RDE. Residue Glu-486 participates in ATP binding. Arg-493 is a binding site for L-aspartate. 538 to 541 serves as a coordination point for ATP; the sequence is GIDR.

It belongs to the class-II aminoacyl-tRNA synthetase family. Type 1 subfamily. In terms of assembly, homodimer.

Its subcellular location is the cytoplasm. It catalyses the reaction tRNA(Asx) + L-aspartate + ATP = L-aspartyl-tRNA(Asx) + AMP + diphosphate. Its function is as follows. Aspartyl-tRNA synthetase with relaxed tRNA specificity since it is able to aspartylate not only its cognate tRNA(Asp) but also tRNA(Asn). Reaction proceeds in two steps: L-aspartate is first activated by ATP to form Asp-AMP and then transferred to the acceptor end of tRNA(Asp/Asn). This Roseobacter denitrificans (strain ATCC 33942 / OCh 114) (Erythrobacter sp. (strain OCh 114)) protein is Aspartate--tRNA(Asp/Asn) ligase.